Here is a 69-residue protein sequence, read N- to C-terminus: ATP synthase subunits region ORF 1 (69 aa).

The protein is ATP synthase subunits region ORF 1 of Fuscovulum blasticum (Rhodobacter blasticus).